We begin with the raw amino-acid sequence, 370 residues long: Succinoglycan biosynthesis protein ExoH (370 aa).

The next 10 helical transmembrane spans lie at 14–34 (ILLISGIVFVHVPYNPQWSPF), 46–66 (VFLGESLFRIGVPCLSAISGY), 88–108 (TVLLPFLIWSGSFFVVVYAIQ), 144–164 (LYFLRDLMLCILLSPLLALLV), 170–190 (VTLLALLAYAILPLPNGIFLK), 193–213 (ILFGFSAGIYASLHGVNIKML), 216–236 (FAAPIAAGFLAIAVVIAVGLY), 244–264 (LWLDMALRLTSIAGIIGSWAI), 282–302 (GLSFWIFCGHYPLLVLFWMIW), and 307–327 (LSYYPLFYFTAPFIAIAILVA). The interval 350-370 (AKRMATQPPQGAQAGYSPQQR) is disordered.

This sequence belongs to the acyltransferase 3 family.

It localises to the cell membrane. It functions in the pathway glycan metabolism; exopolysaccharide biosynthesis. Required for the succinyl modification of the seventh sugar (glucose) of the octasaccharide subunit of succinoglycan (EPS I). This is Succinoglycan biosynthesis protein ExoH (exoH) from Rhizobium meliloti (strain 1021) (Ensifer meliloti).